Consider the following 335-residue polypeptide: MDERIISSETVDAEEVSFETSLRPQNLSQYIGQDKVKNNLTVFIEAATLRNEALDHVLLYGPPGLGKTTLAMVIASEMGSQIKTTSGPAIERPGDLATILTSLEPGDVLFIDEIHRLSRAIEEILYPAMEDYCLDIVIGTGPTARSVRLDLPPFTLIGATTRAGLLSAPLRDRFGVIDHLEFYTEEQLTEIVLRTSNILDTKIDDLGAREIARRSRGTPRIANRLLKRVRDFAQVRGNGTVTEKLAKEALTLLQVDPRGLDTIDQKLLHTIIQSFRGGPVGLDTIAASIGEERETIEDMQEPYLLQIGFLQRTPRGRIVTETAYNHLGISYEKEV.

Residues methionine 1 to tyrosine 183 are large ATPase domain (RuvB-L). Residues leucine 22, arginine 23, glycine 64, lysine 67, threonine 68, threonine 69, glutamate 130–tyrosine 132, arginine 173, tyrosine 183, and arginine 220 contribute to the ATP site. Mg(2+) is bound at residue threonine 68. The small ATPAse domain (RuvB-S) stretch occupies residues threonine 184 to glutamine 254. The head domain (RuvB-H) stretch occupies residues proline 257–valine 335. DNA-binding residues include arginine 293, arginine 312, and arginine 317.

This sequence belongs to the RuvB family. In terms of assembly, homohexamer. Forms an RuvA(8)-RuvB(12)-Holliday junction (HJ) complex. HJ DNA is sandwiched between 2 RuvA tetramers; dsDNA enters through RuvA and exits via RuvB. An RuvB hexamer assembles on each DNA strand where it exits the tetramer. Each RuvB hexamer is contacted by two RuvA subunits (via domain III) on 2 adjacent RuvB subunits; this complex drives branch migration. In the full resolvosome a probable DNA-RuvA(4)-RuvB(12)-RuvC(2) complex forms which resolves the HJ.

The protein localises to the cytoplasm. The catalysed reaction is ATP + H2O = ADP + phosphate + H(+). Its function is as follows. The RuvA-RuvB-RuvC complex processes Holliday junction (HJ) DNA during genetic recombination and DNA repair, while the RuvA-RuvB complex plays an important role in the rescue of blocked DNA replication forks via replication fork reversal (RFR). RuvA specifically binds to HJ cruciform DNA, conferring on it an open structure. The RuvB hexamer acts as an ATP-dependent pump, pulling dsDNA into and through the RuvAB complex. RuvB forms 2 homohexamers on either side of HJ DNA bound by 1 or 2 RuvA tetramers; 4 subunits per hexamer contact DNA at a time. Coordinated motions by a converter formed by DNA-disengaged RuvB subunits stimulates ATP hydrolysis and nucleotide exchange. Immobilization of the converter enables RuvB to convert the ATP-contained energy into a lever motion, pulling 2 nucleotides of DNA out of the RuvA tetramer per ATP hydrolyzed, thus driving DNA branch migration. The RuvB motors rotate together with the DNA substrate, which together with the progressing nucleotide cycle form the mechanistic basis for DNA recombination by continuous HJ branch migration. Branch migration allows RuvC to scan DNA until it finds its consensus sequence, where it cleaves and resolves cruciform DNA. The polypeptide is Holliday junction branch migration complex subunit RuvB (Listeria monocytogenes serovar 1/2a (strain ATCC BAA-679 / EGD-e)).